The chain runs to 133 residues: Stage III sporulation protein AD (133 aa).

Transmembrane regions (helical) follow at residues 2 to 22 (QIDIVQIVGLGLIATFLSLIV), 29 to 49 (FAFLIVVFAGCAIFLYLVDQI), and 108 to 128 (ILILVMAVPILTVIIETILGL).

It localises to the cell membrane. The protein is Stage III sporulation protein AD (spoIIIAD) of Bacillus subtilis (strain 168).